Reading from the N-terminus, the 182-residue chain is Gamma-crystallin N (182 aa).

3 consecutive Beta/gamma crystallin 'Greek key' domains span residues 6–46 (GKIT…HVES), 47–89 (GAWV…RPVG), and 95–136 (FRLE…KVYG). The interval 153–182 (LSSSLQSDQGPEEATTKPATTQPPFLTANL) is disordered. The segment covering 169–182 (KPATTQPPFLTANL) has biased composition (polar residues).

Belongs to the beta/gamma-crystallin family. As to quaternary structure, monomer. Not specifically expressed in eye.

This Homo sapiens (Human) protein is Gamma-crystallin N.